The following is a 347-amino-acid chain: Melanoma-associated antigen B1 (347 aa).

Over residues 1–17 (MPRGQKSKLRAREKRRK) the composition is skewed to basic residues. Positions 1 to 104 (MPRGQKSKLR…QATTSTESSV (104 aa)) are disordered. Composition is skewed to polar residues over residues 39–53 (PSSS…TSSP) and 89–102 (ENAS…STES). The MAGE domain occupies 108 to 307 (VAWEAGMLMH…RDFPSHYEEA (200 aa)). The disordered stretch occupies residues 315–347 (AQVRSSVRARRRTTATTFRARSRAPFSRSSHPM). Residues 328–347 (TATTFRARSRAPFSRSSHPM) show a composition bias toward low complexity.

As to expression, expressed only in testis.

This is Melanoma-associated antigen B1 (MAGEB1) from Homo sapiens (Human).